We begin with the raw amino-acid sequence, 310 residues long: Lymphotoxin-beta (310 aa).

Residues 1–27 (MGALGLQGRGGRPQGTGCLLLAVAGAT) lie on the Cytoplasmic side of the membrane. Residues 28-48 (SLVTLLLAVPITVLAVLALVP) form a helical; Signal-anchor for type II membrane protein membrane-spanning segment. The Extracellular portion of the chain corresponds to 49-310 (QEQGGLVMES…LGKCLHSANV (262 aa)). Positions 67 to 86 (QGLSKSNGLPSRLHSQIPSS) are disordered. The THD domain maps to 138–293 (PAAHLIGAWM…GKTFFGAVMV (156 aa)). Asparagine 272 carries N-linked (GlcNAc...) asparagine glycosylation.

Belongs to the tumor necrosis factor family. As to quaternary structure, heterotrimer of either two LTB and one LTA subunits or (less prevalent) two LTA and one LTB subunits.

The protein localises to the membrane. Functionally, cytokine that binds to LTBR/TNFRSF3. May play a specific role in immune response regulation. Provides the membrane anchor for the attachment of the heterotrimeric complex to the cell surface. This chain is Lymphotoxin-beta (LTB), found in Marmota monax (Woodchuck).